Consider the following 350-residue polypeptide: tRNA uridine(34) hydroxylase (350 aa).

Residues 146 to 240 (DDPDAVFIDM…YARKAREQGL (95 aa)) enclose the Rhodanese domain. The active-site Cysteine persulfide intermediate is the C200. The tract at residues 314 to 350 (PEEEQRRRRAGRENGNKIFNKSRGRLNTQLGIPDPAE) is disordered. Basic and acidic residues predominate over residues 316–328 (EEQRRRRAGRENG).

The protein belongs to the TrhO family.

The catalysed reaction is uridine(34) in tRNA + AH2 + O2 = 5-hydroxyuridine(34) in tRNA + A + H2O. In terms of biological role, catalyzes oxygen-dependent 5-hydroxyuridine (ho5U) modification at position 34 in tRNAs. This chain is tRNA uridine(34) hydroxylase, found in Citrobacter koseri (strain ATCC BAA-895 / CDC 4225-83 / SGSC4696).